Here is a 43-residue protein sequence, read N- to C-terminus: Photosystem I reaction center subunit IX (43 aa).

The chain crosses the membrane as a helical span at residues 7-27 (YLSTAPVLSTIWFGSLAGLLI).

Belongs to the PsaJ family.

Its subcellular location is the plastid. It localises to the chloroplast thylakoid membrane. Its function is as follows. May help in the organization of the PsaE and PsaF subunits. This chain is Photosystem I reaction center subunit IX, found in Vitis vinifera (Grape).